A 418-amino-acid polypeptide reads, in one-letter code: Glutamyl-tRNA reductase (418 aa).

Substrate-binding positions include 49–52 (TCNR), S109, 114–116 (EPQ), and Q120. Residue C50 is the Nucleophile of the active site. Position 189–194 (189–194 (GAGETI)) interacts with NADP(+).

The protein belongs to the glutamyl-tRNA reductase family. In terms of assembly, homodimer.

It carries out the reaction (S)-4-amino-5-oxopentanoate + tRNA(Glu) + NADP(+) = L-glutamyl-tRNA(Glu) + NADPH + H(+). Its pathway is porphyrin-containing compound metabolism; protoporphyrin-IX biosynthesis; 5-aminolevulinate from L-glutamyl-tRNA(Glu): step 1/2. Catalyzes the NADPH-dependent reduction of glutamyl-tRNA(Glu) to glutamate 1-semialdehyde (GSA). This is Glutamyl-tRNA reductase from Erwinia tasmaniensis (strain DSM 17950 / CFBP 7177 / CIP 109463 / NCPPB 4357 / Et1/99).